The following is a 395-amino-acid chain: F-box/LRR-repeat protein 12 (395 aa).

Residues 13–61 (TSIIHLPDDCLSFIFQRLDSVADHDSFGLTCHRWLNIQNISRRSLQFQC) form the F-box domain. LRR repeat units follow at residues 75–100 (NPDV…SLSG), 101–126 (CTVL…YLDC), 127–152 (CFGI…SLYR), 154–177 (NISD…NLSY), 178–203 (CPLV…KISN), 226–250 (SCQL…NISG), 252–278 (SCYI…NLRM), 279–304 (CRTV…NLAL), 305–330 (CHEV…HVNR), and 331–356 (CRNL…YMNG).

The chain is F-box/LRR-repeat protein 12 (FBL12) from Arabidopsis thaliana (Mouse-ear cress).